The sequence spans 418 residues: UDP-N-acetylglucosamine 1-carboxyvinyltransferase (418 aa).

A phosphoenolpyruvate-binding site is contributed by 22-23 (KN). R91 contacts UDP-N-acetyl-alpha-D-glucosamine. C115 acts as the Proton donor in catalysis. C115 bears the 2-(S-cysteinyl)pyruvic acid O-phosphothioketal mark. D305 and I327 together coordinate UDP-N-acetyl-alpha-D-glucosamine.

This sequence belongs to the EPSP synthase family. MurA subfamily.

It is found in the cytoplasm. It catalyses the reaction phosphoenolpyruvate + UDP-N-acetyl-alpha-D-glucosamine = UDP-N-acetyl-3-O-(1-carboxyvinyl)-alpha-D-glucosamine + phosphate. It participates in cell wall biogenesis; peptidoglycan biosynthesis. Functionally, cell wall formation. Adds enolpyruvyl to UDP-N-acetylglucosamine. The chain is UDP-N-acetylglucosamine 1-carboxyvinyltransferase from Aeromonas hydrophila subsp. hydrophila (strain ATCC 7966 / DSM 30187 / BCRC 13018 / CCUG 14551 / JCM 1027 / KCTC 2358 / NCIMB 9240 / NCTC 8049).